A 197-amino-acid chain; its full sequence is Secreted RxLR effector protein 48 (197 aa).

The first 27 residues, 1 to 27 (MCCVSWNWVLACTFLLIFLSWWNCCND), serve as a signal peptide directing secretion. The RxLR-dEER signature appears at 58–79 (RLLRVNLAANAEVLTHEIEEEK).

It belongs to the RxLR effector family.

The protein resides in the secreted. It is found in the host nucleus. The protein localises to the host cytoplasm. Functionally, secreted effector that completely suppresses the host cell death induced by cell death-inducing proteins. The polypeptide is Secreted RxLR effector protein 48 (Plasmopara viticola (Downy mildew of grapevine)).